Consider the following 671-residue polypeptide: DNA ligase (671 aa).

NAD(+)-binding positions include 32–36 (DAEYD), 81–82 (SL), and E113. The active-site N6-AMP-lysine intermediate is the K115. Residues R136, E173, K290, and K314 each coordinate NAD(+). Zn(2+)-binding residues include C408, C411, C426, and C432. In terms of domain architecture, BRCT spans 593–671 (EIDSPFAGKT…EAEMLRLLGV (79 aa)).

Belongs to the NAD-dependent DNA ligase family. LigA subfamily. It depends on Mg(2+) as a cofactor. The cofactor is Mn(2+).

The catalysed reaction is NAD(+) + (deoxyribonucleotide)n-3'-hydroxyl + 5'-phospho-(deoxyribonucleotide)m = (deoxyribonucleotide)n+m + AMP + beta-nicotinamide D-nucleotide.. Functionally, DNA ligase that catalyzes the formation of phosphodiester linkages between 5'-phosphoryl and 3'-hydroxyl groups in double-stranded DNA using NAD as a coenzyme and as the energy source for the reaction. It is essential for DNA replication and repair of damaged DNA. The sequence is that of DNA ligase from Salmonella arizonae (strain ATCC BAA-731 / CDC346-86 / RSK2980).